The following is a 115-amino-acid chain: Large ribosomal subunit protein bL20 (115 aa).

It belongs to the bacterial ribosomal protein bL20 family.

Functionally, binds directly to 23S ribosomal RNA and is necessary for the in vitro assembly process of the 50S ribosomal subunit. It is not involved in the protein synthesizing functions of that subunit. In Prochlorococcus marinus subsp. pastoris (strain CCMP1986 / NIES-2087 / MED4), this protein is Large ribosomal subunit protein bL20.